The primary structure comprises 258 residues: DNA repair protein RecO (258 aa).

This sequence belongs to the RecO family.

In terms of biological role, involved in DNA repair and RecF pathway recombination. The sequence is that of DNA repair protein RecO from Desulfatibacillum aliphaticivorans.